The chain runs to 930 residues: Isoleucine--tRNA ligase (930 aa).

A 'HIGH' region motif is present at residues 57-67 (PYANGNIHVGH). Residue E554 coordinates L-isoleucyl-5'-AMP. The 'KMSKS' region motif lies at 595–599 (KMSKS). K598 lines the ATP pocket. The Zn(2+) site is built by C888, C891, C908, and C911.

Belongs to the class-I aminoacyl-tRNA synthetase family. IleS type 1 subfamily. Monomer. Zn(2+) is required as a cofactor.

It localises to the cytoplasm. The enzyme catalyses tRNA(Ile) + L-isoleucine + ATP = L-isoleucyl-tRNA(Ile) + AMP + diphosphate. Functionally, catalyzes the attachment of isoleucine to tRNA(Ile). As IleRS can inadvertently accommodate and process structurally similar amino acids such as valine, to avoid such errors it has two additional distinct tRNA(Ile)-dependent editing activities. One activity is designated as 'pretransfer' editing and involves the hydrolysis of activated Val-AMP. The other activity is designated 'posttransfer' editing and involves deacylation of mischarged Val-tRNA(Ile). The polypeptide is Isoleucine--tRNA ligase (Streptococcus pneumoniae serotype 19F (strain G54)).